Here is a 220-residue protein sequence, read N- to C-terminus: Large ribosomal subunit protein uL4 (220 aa).

The tract at residues 45–102 (AARQGTHKTKTRGEVRGGGRKPFRQKGTGRARQGSIRAPHYTGGGTVHGPVPRDYSQR) is disordered. Residues 62–73 (GGRKPFRQKGTG) show a composition bias toward basic residues.

It belongs to the universal ribosomal protein uL4 family. Part of the 50S ribosomal subunit.

Functionally, one of the primary rRNA binding proteins, this protein initially binds near the 5'-end of the 23S rRNA. It is important during the early stages of 50S assembly. It makes multiple contacts with different domains of the 23S rRNA in the assembled 50S subunit and ribosome. Its function is as follows. Forms part of the polypeptide exit tunnel. The protein is Large ribosomal subunit protein uL4 of Corynebacterium aurimucosum (strain ATCC 700975 / DSM 44827 / CIP 107346 / CN-1) (Corynebacterium nigricans).